A 1106-amino-acid polypeptide reads, in one-letter code: Probable LRR receptor-like serine/threonine-protein kinase At1g74360 (1106 aa).

A signal peptide spans 1–34; it reads MTMVTRVIMTDDDSQSLCFLCFLLFFFITAIAVA. At 35–736 the chain is on the extracellular side; that stretch reads GDSLDSDREV…PRTLLLIWIS (702 aa). LRR repeat units lie at residues 86–109, 110–134, 136–156, 157–182, 184–204, 205–226, and 227–250; these read RSRV…NFSA, LTEL…LSRC, NLKH…LPGL, SNLE…LFCN, LVVA…IFNG, CRNL…WTGF, and GRLV…MFRG. 2 N-linked (GlcNAc...) asparagine glycosylation sites follow: N93 and N106. N141 carries N-linked (GlcNAc...) asparagine glycosylation. N188 and N193 each carry an N-linked (GlcNAc...) asparagine glycan. N-linked (GlcNAc...) asparagine glycans are attached at residues N242 and N251. 15 LRR repeats span residues 252–275, 276–299, 300–323, 325–346, 348–371, 372–396, 398–419, 420–443, 445–468, 470–492, 566–593, 594–617, 619–640, 641–664, and 666–690; these read CTLQ…VSNC, QNLN…IGSI, SSLK…LLNL, NLVF…IFGR, TQVK…NILK, LPNL…ISQI, SLKF…EYGN, MPGL…SFGK, TSLL…IGNC, SLLW…LTRM, VRTL…ISQM, DRLS…IGQL, LAFL…IGNL, KCLQ…LNDL, and ELSK…QVAT. N309 and N322 each carry an N-linked (GlcNAc...) asparagine glycan. 4 N-linked (GlcNAc...) asparagine glycosylation sites follow: N365, N374, N384, and N408. Residues N454 and N467 are each glycosylated (N-linked (GlcNAc...) asparagine). N623, N628, N652, N671, N709, and N713 each carry an N-linked (GlcNAc...) asparagine glycan. Residues 737 to 757 form a helical membrane-spanning segment; it reads LALALAFIACLVVSGIVLMVV. Topologically, residues 758–1106 are cytoplasmic; it reads KASREAEIDL…GLSSQGYIEM (349 aa). A phosphothreonine mark is found at T803 and T811. The 282-residue stretch at 814 to 1095 folds into the Protein kinase domain; it reads FSEERVVGRG…VKISGKAELF (282 aa). ATP contacts are provided by residues 820–828 and K842; that span reads VGRGGYGTV. Catalysis depends on D941, which acts as the Proton acceptor. The residue at position 983 (Y983) is a Phosphotyrosine. T991 bears the Phosphothreonine mark.

It belongs to the protein kinase superfamily. Ser/Thr protein kinase family.

The protein resides in the mitochondrion membrane. The enzyme catalyses L-seryl-[protein] + ATP = O-phospho-L-seryl-[protein] + ADP + H(+). The catalysed reaction is L-threonyl-[protein] + ATP = O-phospho-L-threonyl-[protein] + ADP + H(+). This Arabidopsis thaliana (Mouse-ear cress) protein is Probable LRR receptor-like serine/threonine-protein kinase At1g74360.